A 166-amino-acid chain; its full sequence is MNYTSFILAFQLCAILGSSTYYCQAAFFKEIENLKEYFNASNPDVGDGGPLFLDILKNWKEDSDKKIIQSQIVSFYFKLFENLKDNQVIQKSMDTIKEDLFVKFFNSSTSKLEDFQKLIQIPVNDLKVQRKAISELIKVMNDLSPKANLRKRKRSQNPFRGRRALQ.

Residues 1 to 23 form the signal peptide; sequence MNYTSFILAFQLCAILGSSTYYC. Glutamine 24 bears the Pyrrolidone carboxylic acid mark. N-linked (GlcNAc...) asparagine glycosylation is found at asparagine 39 and asparagine 106. The segment at 147 to 166 is disordered; that stretch reads ANLRKRKRSQNPFRGRRALQ. The segment covering 148–166 has biased composition (basic residues); the sequence is NLRKRKRSQNPFRGRRALQ.

Belongs to the type II (or gamma) interferon family. In terms of assembly, homodimer. Interacts with IFNGR1 (via extracellular domain); this interaction promotes IFNGR1 dimerization. In terms of tissue distribution, released primarily from activated T lymphocytes.

Its subcellular location is the secreted. Functionally, type II interferon produced by immune cells such as T-cells and NK cells that plays crucial roles in antimicrobial, antiviral, and antitumor responses by activating effector immune cells and enhancing antigen presentation. Primarily signals through the JAK-STAT pathway after interaction with its receptor IFNGR1 to affect gene regulation. Upon IFNG binding, IFNGR1 intracellular domain opens out to allow association of downstream signaling components JAK2, JAK1 and STAT1, leading to STAT1 activation, nuclear translocation and transcription of IFNG-regulated genes. Many of the induced genes are transcription factors such as IRF1 that are able to further drive regulation of a next wave of transcription. Plays a role in class I antigen presentation pathway by inducing a replacement of catalytic proteasome subunits with immunoproteasome subunits. In turn, increases the quantity, quality, and repertoire of peptides for class I MHC loading. Increases the efficiency of peptide generation also by inducing the expression of activator PA28 that associates with the proteasome and alters its proteolytic cleavage preference. Up-regulates as well MHC II complexes on the cell surface by promoting expression of several key molecules such as cathepsins B/CTSB, H/CTSH, and L/CTSL. Participates in the regulation of hematopoietic stem cells during development and under homeostatic conditions by affecting their development, quiescence, and differentiation. The sequence is that of Interferon gamma (IFNG) from Equus caballus (Horse).